The sequence spans 58 residues: Small ribosomal subunit protein bS21 (58 aa).

The interval 39–58 is disordered; sequence EKPSVKRKRKSEVARKRKKF. A compositionally biased stretch (basic residues) spans 43–58; the sequence is VKRKRKSEVARKRKKF.

The protein belongs to the bacterial ribosomal protein bS21 family.

The protein is Small ribosomal subunit protein bS21 of Streptococcus pneumoniae (strain ATCC BAA-255 / R6).